A 330-amino-acid chain; its full sequence is Ribosomal RNA small subunit methyltransferase H (330 aa).

Residues 51-53 (GGH), aspartate 70, aspartate 118, and glutamine 125 each bind S-adenosyl-L-methionine. The segment at 276–330 (STDSTPPGLPVPLPDRQPELRLLTRGAELPTEQETAANPRAASARLRAAERTREP) is disordered. Residues 311–321 (AANPRAASARL) are compositionally biased toward low complexity.

The protein belongs to the methyltransferase superfamily. RsmH family.

The protein resides in the cytoplasm. The enzyme catalyses cytidine(1402) in 16S rRNA + S-adenosyl-L-methionine = N(4)-methylcytidine(1402) in 16S rRNA + S-adenosyl-L-homocysteine + H(+). Functionally, specifically methylates the N4 position of cytidine in position 1402 (C1402) of 16S rRNA. The sequence is that of Ribosomal RNA small subunit methyltransferase H from Thermobifida fusca (strain YX).